The following is a 789-amino-acid chain: Ent-kaurene synthase TSP4, chloroplastic (789 aa).

The Mg(2+) site is built by Asp540 and Asp544. The DDXXD motif signature appears at 540–544; it reads DDFFD. The helical transmembrane segment at 638–656 threads the bilayer; the sequence is AYVSFALGPIVLPALYLVG. Mg(2+)-binding residues include Asn684, Arg687, and Glu692.

It belongs to the terpene synthase family. The cofactor is Mg(2+). As to expression, expressed in leaves and fruits, including trichomes.

The protein localises to the plastid. The protein resides in the chloroplast membrane. The enzyme catalyses ent-copalyl diphosphate = ent-kaur-16-ene + diphosphate. It participates in plant hormone biosynthesis; gibberellin biosynthesis. Involved in the biosynthesis of labdane-type diterpenoid including cleroda-dienols, and peregrinol lactones and furan derivatives, dopaminergic diterpenoids that can bind to dopamine receptors in the human pituitary gland, have probably ability to lower prolactin levels, and are used to treat menstrual cycle disorders (e.g. premenstrual syndrome and mastodynia). Terpene synthase that produces ent-kaurene from ent-copalyl diphosphate. The protein is Ent-kaurene synthase TSP4, chloroplastic of Vitex agnus-castus (Chaste tree).